The primary structure comprises 358 residues: Presenilin hop-1 (358 aa).

Residues 1-12 (MPRTKRVYSGKT) lie on the Cytoplasmic side of the membrane. The chain crosses the membrane as a helical span at residues 13 to 33 (ITGVLYPVAICMLFVAINVKL). The Lumenal portion of the chain corresponds to 34-57 (SQPEQQEQSKVVYGLFHSYDTADS). Residues 58-78 (GTITLYLIGFLILTTSLGVFC) form a helical membrane-spanning segment. The Cytoplasmic portion of the chain corresponds to 79–86 (YQMKFYKA). The helical transmembrane segment at 87–107 (IKVYVLANSIGILLVYSVFHF) threads the bilayer. The Lumenal portion of the chain corresponds to 108-115 (QRIAEAQS). A helical transmembrane segment spans residues 116 to 136 (IPVSVPTFFFLILQFGGLGIT). The Cytoplasmic segment spans residues 137–148 (CLHWKSHRRLHQ). Residues 149–169 (FYLIMLAGLTAIFILNILPDW) form a helical membrane-spanning segment. Thr-170 is a topological domain (lumenal). The helical transmembrane segment at 171 to 191 (VWMALTAISFWDIVAVLTPCG) threads the bilayer. The active site involves Asp-182. Residues 192 to 273 (PLKMLVETAN…EVREVEGTIR (82 aa)) are Cytoplasmic-facing. Over residues 221-240 (EVDSPDTTRSNSTPLTEFNN) the composition is skewed to polar residues. Positions 221-242 (EVDSPDTTRSNSTPLTEFNNSS) are disordered. The helical transmembrane segment at 274–294 (LGMGDFVFYSLMLGNTVQTCP) threads the bilayer. Residue Asp-278 is part of the active site. At 295–297 (LPT) the chain is on the lumenal side. A helical transmembrane segment spans residues 298 to 318 (VVACFVSNLVGLTITLPIVTL). At 319–321 (SQT) the chain is on the cytoplasmic side. Residues 322–342 (ALPALPFPLAIAAIFYFSSHI) constitute an intramembrane region (helical). The PAL motif lies at 324-326 (PAL). Over 343 to 358 (ALTPFTDLCTSQLILI) the chain is Cytoplasmic.

It belongs to the peptidase A22A family. Homodimer. Component of the gamma-secretase complex, a complex probably composed of the presenilin homodimer (sel-12, hop-1 or spe-4), nicastrin (aph-2), aph-1 and pen-2. As to expression, weakly expressed.

The protein localises to the endoplasmic reticulum membrane. The protein resides in the golgi apparatus membrane. Its function is as follows. Probable catalytic subunit of the gamma-secretase complex, an endoprotease complex that catalyzes the intramembrane cleavage of integral membrane proteins such as Notch receptors (lin-12 or glp-1). Probably works redundantly of lin-12, which provides more presenilin function. This chain is Presenilin hop-1 (hop-1), found in Caenorhabditis elegans.